Consider the following 549-residue polypeptide: Alpha-amylase (549 aa).

Positions 1–34 are cleaved as a signal peptide; the sequence is MLTFHRIIRKGWMFLLAFLLTALLFCPTGQPAKA. Asp139, Asp196, Ala218, Asp220, Asp231, and Asp237 together coordinate Ca(2+). Asp196 contacts Na(+). Positions 220, 231, 237, and 238 each coordinate Na(+). Asp239 is a binding site for Ca(2+). Residue Asp268 is the Nucleophile of the active site. Ca(2+) is bound at residue His272. Residue Glu298 is the Proton donor of the active site. Residues Gly337, Phe339, Ser440, Asp441, and Asp464 each coordinate Ca(2+).

The protein belongs to the glycosyl hydrolase 13 family. As to quaternary structure, monomer. Requires Ca(2+) as cofactor. The cofactor is Na(+).

Its subcellular location is the secreted. The catalysed reaction is Endohydrolysis of (1-&gt;4)-alpha-D-glucosidic linkages in polysaccharides containing three or more (1-&gt;4)-alpha-linked D-glucose units.. In Geobacillus stearothermophilus (Bacillus stearothermophilus), this protein is Alpha-amylase (amyS).